The chain runs to 262 residues: Hydroxyethylthiazole kinase (262 aa).

Methionine 50 lines the substrate pocket. ATP is bound by residues arginine 125 and threonine 171. A substrate-binding site is contributed by glycine 198.

It belongs to the Thz kinase family. It depends on Mg(2+) as a cofactor.

It carries out the reaction 5-(2-hydroxyethyl)-4-methylthiazole + ATP = 4-methyl-5-(2-phosphooxyethyl)-thiazole + ADP + H(+). It functions in the pathway cofactor biosynthesis; thiamine diphosphate biosynthesis; 4-methyl-5-(2-phosphoethyl)-thiazole from 5-(2-hydroxyethyl)-4-methylthiazole: step 1/1. Its function is as follows. Catalyzes the phosphorylation of the hydroxyl group of 4-methyl-5-beta-hydroxyethylthiazole (THZ). The sequence is that of Hydroxyethylthiazole kinase from Escherichia coli O45:K1 (strain S88 / ExPEC).